A 243-amino-acid polypeptide reads, in one-letter code: Large ribosomal subunit protein uL30 (243 aa).

The disordered stretch occupies residues 1 to 31 (MADKILTPESQLKKSKAQQKSAEQVAAERAA). Positions 18–28 (QQKSAEQVAAE) are enriched in low complexity.

This sequence belongs to the universal ribosomal protein uL30 family.

This Eremothecium gossypii (strain ATCC 10895 / CBS 109.51 / FGSC 9923 / NRRL Y-1056) (Yeast) protein is Large ribosomal subunit protein uL30 (RPL7).